A 129-amino-acid polypeptide reads, in one-letter code: L-ectoine synthase (129 aa).

It belongs to the ectoine synthase family.

It carries out the reaction (2S)-4-acetamido-2-aminobutanoate = L-ectoine + H2O. It functions in the pathway amine and polyamine biosynthesis; ectoine biosynthesis; L-ectoine from L-aspartate 4-semialdehyde: step 3/3. Functionally, catalyzes the circularization of gamma-N-acetyl-alpha,gamma-diaminobutyric acid (ADABA) to ectoine (1,4,5,6-tetrahydro-2-methyl-4-pyrimidine carboxylic acid), which is an excellent osmoprotectant. This is L-ectoine synthase from Mycobacterium sp. (strain KMS).